The following is a 641-amino-acid chain: Single-strand DNA endonuclease 1 (641 aa).

The segment at 1–90 is N-domain; sequence MGVKNLWDIL…SLKLATYRRR (90 aa). The segment at 2-97 is XPG-N domain; that stretch reads GVKNLWDILE…RRRLGSISHA (96 aa). Residues Asp30, Asp76, Glu144, Glu146, Asp165, Asp167, and Asp217 each coordinate Mg(2+). Positions 132-217 are XPG-I domain; it reads MALGIPCLDG…ISLAVLLGSD (86 aa). I-domain regions lie at residues 132–220 and 132–221; these read MALG…DYSN and MALG…YSNG. A 5'-3' exonuclease domain region spans residues 217–350; the sequence is DYSNGVNGFG…ILPKIAEREL (134 aa). 2 disordered regions span residues 428 to 448 and 572 to 615; these read KGEE…QAAV and VGSH…RVHH. The span at 580–590 shows a compositional bias: gly residues; sequence DGGGGGGGGVA.

The protein belongs to the XPG/RAD2 endonuclease family. GEN subfamily. It depends on Mg(2+) as a cofactor. In terms of tissue distribution, highly expressed in shoot apical meristem (SAM) and young leaves. Expressed in roots, flag leaf and panicles.

It is found in the nucleus. Single-stranded DNA endonuclease activity in vitro. May not be active as double-stranded DNA endonuclease. Endonuclease which cleaves flap structures at the junction between single-stranded DNA and double-stranded DNA with a specific cleavage site in the 5' overhang strand exactly one nucleotide 3' of the branch point. Structure- and sequence-specific nuclease that resolves holliday junctions (HJs) by symmetrically oriented incisions in two opposing strands near the junction point, thus leading to ligatable products; HJs are physical links between homologous DNA molecules that arise as central intermediary structures during homologous recombination and repair in meiotic and somatic cells. Probably involved in the resolution of toxic replication structures to ensure genome stability, and to maintain telomere integrity and replication. This is Single-strand DNA endonuclease 1 from Oryza sativa subsp. japonica (Rice).